Here is a 204-residue protein sequence, read N- to C-terminus: Hydrophilin YNL190W (204 aa).

The first 20 residues, 1–20 (MKFSSVTAITLATVATVATA), serve as a signal peptide directing secretion. The segment covering 35 to 46 (SDGSLTTTTSTH) has biased composition (low complexity). The segment at 35–179 (SDGSLTTTTS…ARKNNAAPGP (145 aa)) is disordered. The span at 47-59 (TTHKYGKFNKTSK) shows a compositional bias: basic residues. N-linked (GlcNAc...) asparagine glycosylation is found at N55, N64, N75, N84, N95, N104, N115, N124, N135, N144, and N155. A compositionally biased stretch (basic residues) spans 67-79 (GTHKYGKFNKTSK). Positions 87–99 (GTHKYGKFNKTSK) are enriched in basic residues. A compositionally biased stretch (basic residues) spans 107–119 (GTHKYGKFNKTSK). Positions 127 to 139 (GTHKYGKFNKTSK) are enriched in basic residues. A compositionally biased stretch (basic residues) spans 147-156 (GTHKYGKFNK). N174 is lipidated: GPI-anchor amidated asparagine. Positions 175–204 (AAPGPSNFNSIKLFGVTAGSAAVAGALLLL) are cleaved as a propeptide — removed in mature form.

This sequence belongs to the PGA14 family. In terms of processing, the GPI-anchor is attached to the protein in the endoplasmic reticulum and serves to target the protein to the cell surface. There, the glucosamine-inositol phospholipid moiety is cleaved off and the GPI-modified mannoprotein is covalently attached via its lipidless GPI glycan remnant to the 1,6-beta-glucan of the outer cell wall layer.

It is found in the secreted. The protein localises to the cell wall. Its subcellular location is the membrane. Functionally, hydrophilin which is essential to overcome the simple stress of the desiccation-rehydration process. This chain is Hydrophilin YNL190W, found in Saccharomyces cerevisiae (strain ATCC 204508 / S288c) (Baker's yeast).